An 80-amino-acid chain; its full sequence is MQSLIAAIVALVVVAIIAIVVWSIVFIEYRKILRQRKIDRLIDRIRERAEDSGNESEGDQEELSALVEMGHDAPWDIDDL.

Residues 1-6 (MQSLIA) lie on the Extracellular side of the membrane. Residues 7-27 (AIVALVVVAIIAIVVWSIVFI) traverse the membrane as a helical segment. At 28–80 (EYRKILRQRKIDRLIDRIRERAEDSGNESEGDQEELSALVEMGHDAPWDIDDL) the chain is on the cytoplasmic side. Residues 49–80 (AEDSGNESEGDQEELSALVEMGHDAPWDIDDL) are disordered. Residues Ser52 and Ser56 each carry the phosphoserine; by host CK2 modification. The segment covering 52–62 (SGNESEGDQEE) has biased composition (acidic residues).

It belongs to the HIV-1 VPU protein family. Homopentamer. Interacts with host CD4 and BRTC; these interactions induce proteasomal degradation of CD4. Interacts with host BST2; this interaction leads to the degradation of host BST2. Interacts with host FBXW11. Interacts with host AP1M1; this interaction plays a role in the mistrafficking and subsequent degradation of host BST2. Interacts with host RANBP2; this interaction allows Vpu to down-regulate host BLM sumoylation. Phosphorylated by host CK2. This phosphorylation is necessary for interaction with human BTRC and degradation of CD4.

It localises to the host membrane. Its activity is regulated as follows. Ion channel activity is inhibited by hexamethylene amiloride in vitro. Enhances virion budding by targeting host CD4 and Tetherin/BST2 to proteasome degradation. Degradation of CD4 prevents any unwanted premature interactions between viral Env and its host receptor CD4 in the endoplasmic reticulum. Degradation of antiretroviral protein Tetherin/BST2 is important for virion budding, as BST2 tethers new viral particles to the host cell membrane. Mechanistically, Vpu bridges either CD4 or BST2 to BTRC, a substrate recognition subunit of the Skp1/Cullin/F-box protein E3 ubiquitin ligase, induces their ubiquitination and subsequent proteasomal degradation. The alteration of the E3 ligase specificity by Vpu seems to promote the degradation of host IKBKB, leading to NF-kappa-B down-regulation and subsequent apoptosis. Acts as a viroporin that forms an oligomeric ion channel in membranes. Modulates the host DNA repair mechanisms to promote degradation of nuclear viral cDNA in cells that are already productively infected in order to suppress immune sensing and proviral hyper-integration (superinfection). Manipulates PML-NBs and modulates SUMOylation of host BLM protein thereby enhancing its DNA-end processing activity toward viral unintegrated linear DNA. Also inhibits RAD52-mediated homologous repair of viral cDNA, preventing the generation of dead-end circular forms of single copies of the long terminal repeat and permitting sustained nucleolytic attack. The polypeptide is Protein Vpu (Human immunodeficiency virus type 1 group M subtype B (isolate JH32) (HIV-1)).